The following is a 310-amino-acid chain: Homeobox protein Hox-A13a (310 aa).

The homeobox DNA-binding region spans 244–303; sequence GRKKRVPYTKVQLKELEREYATNKFITKDKRRRISAQTNLSERQVTIWFQNRRVKEKKVV.

This sequence belongs to the Abd-B homeobox family.

It is found in the nucleus. In terms of biological role, sequence-specific transcription factor which is part of a developmental regulatory system that provides cells with specific positional identities on the anterior-posterior axis. This is Homeobox protein Hox-A13a (hoxa13a) from Danio rerio (Zebrafish).